Here is a 302-residue protein sequence, read N- to C-terminus: Protoheme IX farnesyltransferase 2 (302 aa).

9 helical membrane passes run 14–34 (IIFG…QGSV), 36–56 (WWLL…GCAI), 85–105 (AALA…WFCT), 108–128 (LATG…SLYM), 133–153 (VYGT…GYCA), 163–183 (AILL…IAIF), 209–229 (IVLY…GGYA), 230–250 (GYGY…MALS), and 264–284 (QVFF…AVDG).

Belongs to the UbiA prenyltransferase family. Protoheme IX farnesyltransferase subfamily.

The protein localises to the cell inner membrane. The enzyme catalyses heme b + (2E,6E)-farnesyl diphosphate + H2O = Fe(II)-heme o + diphosphate. Its pathway is porphyrin-containing compound metabolism; heme O biosynthesis; heme O from protoheme: step 1/1. In terms of biological role, converts heme B (protoheme IX) to heme O by substitution of the vinyl group on carbon 2 of heme B porphyrin ring with a hydroxyethyl farnesyl side group. The chain is Protoheme IX farnesyltransferase 2 from Chromobacterium violaceum (strain ATCC 12472 / DSM 30191 / JCM 1249 / CCUG 213 / NBRC 12614 / NCIMB 9131 / NCTC 9757 / MK).